The chain runs to 180 residues: MAASGLKVPEMALRVCVVPLALASLWEMATNAQADDTYGEVKFSDLSGFSYLVGVNAVTAAYALVSILLSSLKPLARYDWVILVMDQASAYLLVTSASAAAELLQLARRGDREVSWGEVCSYFGRFCGKATVSLALHAAALACFVALALVSAFRVLSTTGSSCHPPKHAQAQEHEQGRYN.

The Cytoplasmic segment spans residues 1-7 (MAASGLK). Residues 8 to 28 (VPEMALRVCVVPLALASLWEM) traverse the membrane as a helical segment. Residues 29 to 48 (ATNAQADDTYGEVKFSDLSG) are Extracellular-facing. The chain crosses the membrane as a helical span at residues 49–69 (FSYLVGVNAVTAAYALVSILL). Over 70–79 (SSLKPLARYD) the chain is Cytoplasmic. A helical membrane pass occupies residues 80-100 (WVILVMDQASAYLLVTSASAA). Residues 101–129 (AELLQLARRGDREVSWGEVCSYFGRFCGK) lie on the Extracellular side of the membrane. Residues 130-150 (ATVSLALHAAALACFVALALV) form a helical membrane-spanning segment. Over 151-180 (SAFRVLSTTGSSCHPPKHAQAQEHEQGRYN) the chain is Cytoplasmic. Residues 161-180 (SSCHPPKHAQAQEHEQGRYN) are disordered. Over residues 170–180 (QAQEHEQGRYN) the composition is skewed to basic and acidic residues.

This sequence belongs to the Casparian strip membrane proteins (CASP) family. Homodimer and heterodimers.

It is found in the cell membrane. This chain is CASP-like protein 2D1, found in Sorghum bicolor (Sorghum).